The following is a 504-amino-acid chain: Ectoine/proline transporter ProP (504 aa).

The next 11 helical transmembrane spans lie at 41–61, 71–91, 118–138, 169–189, 207–227, 272–292, 309–329, 337–357, 362–382, 399–419, and 430–450; these read FMEW…TAVF, LLAV…GGLV, LIGL…LLYL, FFGA…ASVV, DFGW…AVYL, LLIG…LTSY, AAVT…VGMW, PVYA…FLIM, IGAV…YVAL, GMGI…PLIT, and IVPA…LLFM. The disordered stretch occupies residues 477–504; it reads NQDEDPNIDLSHMPFPDEENVGAEKQNA.

Belongs to the major facilitator superfamily.

The protein localises to the cell membrane. Its activity is regulated as follows. Uptake is activated by osmotic stress. Inhibited by CCCP. In terms of biological role, involved in the uptake of osmoprotectants. Can transport ectoine and proline. Protons are probably the coupling ions. This is Ectoine/proline transporter ProP from Corynebacterium glutamicum (strain ATCC 13032 / DSM 20300 / JCM 1318 / BCRC 11384 / CCUG 27702 / LMG 3730 / NBRC 12168 / NCIMB 10025 / NRRL B-2784 / 534).